A 268-amino-acid chain; its full sequence is Mesoderm posterior protein 1 (268 aa).

The disordered stretch occupies residues 17–93 (AAWGPTRRPP…RQSASEREKL (77 aa)). Positions 36–48 (LVSSPDSWGSTPA) are enriched in polar residues. Residues 66-86 (APSVGRRGARSSRLGSGQRQS) are compositionally biased toward low complexity. The bHLH domain maps to 82-136 (GQRQSASEREKLRMRTLARALHELRRFLPPSVAPAGQSLTKIETLRLAIRYIGHL). The short motif at 163–167 (CPLCP) is the CPLCP element. 2 consecutive repeat copies span residues 182-183 (GQ) and 184-185 (GQ). Residues 182-185 (GQGQ) are 2 X 2 AA tandem repeats of G-Q.

It localises to the nucleus. Functionally, transcription factor. Plays a role in the epithelialization of somitic mesoderm and in the development of cardiac mesoderm. Defines the rostrocaudal patterning of the somites by participating in distinct Notch pathways. The chain is Mesoderm posterior protein 1 (MESP1) from Homo sapiens (Human).